A 307-amino-acid polypeptide reads, in one-letter code: Aspartate carbamoyltransferase catalytic subunit (307 aa).

The carbamoyl phosphate site is built by R56 and T57. L-aspartate is bound at residue K84. Residues R106, H136, and Q139 each contribute to the carbamoyl phosphate site. L-aspartate contacts are provided by R169 and R221. 2 residues coordinate carbamoyl phosphate: A262 and P263.

Belongs to the aspartate/ornithine carbamoyltransferase superfamily. ATCase family. Heterododecamer (2C3:3R2) of six catalytic PyrB chains organized as two trimers (C3), and six regulatory PyrI chains organized as three dimers (R2).

The enzyme catalyses carbamoyl phosphate + L-aspartate = N-carbamoyl-L-aspartate + phosphate + H(+). It participates in pyrimidine metabolism; UMP biosynthesis via de novo pathway; (S)-dihydroorotate from bicarbonate: step 2/3. In terms of biological role, catalyzes the condensation of carbamoyl phosphate and aspartate to form carbamoyl aspartate and inorganic phosphate, the committed step in the de novo pyrimidine nucleotide biosynthesis pathway. The sequence is that of Aspartate carbamoyltransferase catalytic subunit from Streptococcus pneumoniae (strain P1031).